The primary structure comprises 952 residues: Meiotic coiled-coil protein 3 (952 aa).

Coiled coils occupy residues 283-611 (QLLQ…KEHL), 684-716 (TKKF…EDKL), and 839-942 (SLEN…RERE).

The protein localises to the cytoplasm. Functionally, has a role in meiosis. This chain is Meiotic coiled-coil protein 3 (mcp3), found in Schizosaccharomyces pombe (strain 972 / ATCC 24843) (Fission yeast).